The chain runs to 136 residues: Small ribosomal subunit protein uS11c (136 aa).

The protein belongs to the universal ribosomal protein uS11 family. As to quaternary structure, part of the 30S ribosomal subunit.

The protein localises to the plastid. This chain is Small ribosomal subunit protein uS11c, found in Epifagus virginiana (Beechdrops).